The sequence spans 118 residues: Large ribosomal subunit protein uL18 (118 aa).

It belongs to the universal ribosomal protein uL18 family. Part of the 50S ribosomal subunit; part of the 5S rRNA/L5/L18/L25 subcomplex. Contacts the 5S and 23S rRNAs.

Its function is as follows. This is one of the proteins that bind and probably mediate the attachment of the 5S RNA into the large ribosomal subunit, where it forms part of the central protuberance. This chain is Large ribosomal subunit protein uL18, found in Nitratiruptor sp. (strain SB155-2).